The chain runs to 399 residues: Acetylornithine aminotransferase (399 aa).

Residues 97–98 (GA) and phenylalanine 130 contribute to the pyridoxal 5'-phosphate site. Arginine 133 is a binding site for N(2)-acetyl-L-ornithine. 215-218 (DEVQ) provides a ligand contact to pyridoxal 5'-phosphate. The residue at position 244 (lysine 244) is an N6-(pyridoxal phosphate)lysine. Threonine 272 is a binding site for N(2)-acetyl-L-ornithine. Threonine 273 is a pyridoxal 5'-phosphate binding site.

This sequence belongs to the class-III pyridoxal-phosphate-dependent aminotransferase family. ArgD subfamily. As to quaternary structure, homodimer. Pyridoxal 5'-phosphate is required as a cofactor.

The protein resides in the cytoplasm. The catalysed reaction is N(2)-acetyl-L-ornithine + 2-oxoglutarate = N-acetyl-L-glutamate 5-semialdehyde + L-glutamate. Its pathway is amino-acid biosynthesis; L-arginine biosynthesis; N(2)-acetyl-L-ornithine from L-glutamate: step 4/4. The polypeptide is Acetylornithine aminotransferase (Mesorhizobium japonicum (strain LMG 29417 / CECT 9101 / MAFF 303099) (Mesorhizobium loti (strain MAFF 303099))).